The following is a 104-amino-acid chain: ATP-dependent Clp protease adapter protein ClpS (104 aa).

The protein belongs to the ClpS family. As to quaternary structure, binds to the N-terminal domain of the chaperone ClpA.

In terms of biological role, involved in the modulation of the specificity of the ClpAP-mediated ATP-dependent protein degradation. The sequence is that of ATP-dependent Clp protease adapter protein ClpS from Hydrogenovibrio crunogenus (strain DSM 25203 / XCL-2) (Thiomicrospira crunogena).